The primary structure comprises 847 residues: Protein IRS1 (847 aa).

Disordered regions lie at residues 1-82 (MAQR…NFWH), 607-627 (WLMEQPPPPSRQTKPDAATMP), and 715-847 (QVIP…HVHH). A compositionally biased stretch (gly residues) spans 16 to 25 (RGRGAGGPSG). Residues 26 to 56 (VGSSPPSSCVPMGATSTAGTGASAAPTATPG) show a composition bias toward low complexity. Residues 723–733 (EPEDDDEDPTY) are compositionally biased toward acidic residues. The span at 833–847 (RPKKCQTHAPHHVHH) shows a compositional bias: basic residues.

Belongs to the herpesviridae US22 family. Interacts (via N-terminus) with the viral DNA polymerase accessory subunit UL44. Interacts (via C-terminus) with host EIF2AK2.

Its subcellular location is the virion. It localises to the host cytoplasm. It is found in the host nucleus. Functionally, acts as a transactivator along with IE2, and is required for oriLyt-dependent DNA replication in the transient transfection replication assay using native promoters. The sequence is that of Protein IRS1 (IRS1) from Human cytomegalovirus (strain Merlin) (HHV-5).